Reading from the N-terminus, the 347-residue chain is Phenylalanine--tRNA ligase alpha subunit (347 aa).

Position 261 (glutamate 261) interacts with Mg(2+).

This sequence belongs to the class-II aminoacyl-tRNA synthetase family. Phe-tRNA synthetase alpha subunit type 1 subfamily. In terms of assembly, tetramer of two alpha and two beta subunits. Requires Mg(2+) as cofactor.

The protein localises to the cytoplasm. It carries out the reaction tRNA(Phe) + L-phenylalanine + ATP = L-phenylalanyl-tRNA(Phe) + AMP + diphosphate + H(+). The sequence is that of Phenylalanine--tRNA ligase alpha subunit from Streptococcus pyogenes serotype M1.